The chain runs to 171 residues: S-ribosylhomocysteine lyase (171 aa).

Residues H54, H58, and C128 each contribute to the Fe cation site.

The protein belongs to the LuxS family. In terms of assembly, homodimer. Fe cation is required as a cofactor.

It catalyses the reaction S-(5-deoxy-D-ribos-5-yl)-L-homocysteine = (S)-4,5-dihydroxypentane-2,3-dione + L-homocysteine. Involved in the synthesis of autoinducer 2 (AI-2) which is secreted by bacteria and is used to communicate both the cell density and the metabolic potential of the environment. The regulation of gene expression in response to changes in cell density is called quorum sensing. Catalyzes the transformation of S-ribosylhomocysteine (RHC) to homocysteine (HC) and 4,5-dihydroxy-2,3-pentadione (DPD). This Escherichia coli O157:H7 protein is S-ribosylhomocysteine lyase.